The following is a 208-amino-acid chain: 23 kDa protein (208 aa).

This Pea early browning virus protein is 23 kDa protein.